The following is a 133-amino-acid chain: Holo-[acyl-carrier-protein] synthase (133 aa).

Mg(2+)-binding residues include Asp-8 and Glu-57.

This sequence belongs to the P-Pant transferase superfamily. AcpS family. It depends on Mg(2+) as a cofactor.

It localises to the cytoplasm. It catalyses the reaction apo-[ACP] + CoA = holo-[ACP] + adenosine 3',5'-bisphosphate + H(+). Its function is as follows. Transfers the 4'-phosphopantetheine moiety from coenzyme A to a Ser of acyl-carrier-protein. The protein is Holo-[acyl-carrier-protein] synthase of Chelativorans sp. (strain BNC1).